The following is a 358-amino-acid chain: Protein PXR1 (358 aa).

2 disordered regions span residues 1–26 and 146–342; these read MGLAAPKNRSKISNDPQNTTWANNTS and EVKT…KSAT. Positions 11–26 are enriched in polar residues; it reads KISNDPQNTTWANNTS. The region spanning 25 to 79 is the G-patch domain; sequence TSRFGHRILTSQGWQPGDSLGASDAAHAAHYTVASQSHIRVLLKDDNLGLGAKRG. Composition is skewed to basic and acidic residues over residues 146-171 and 199-217; these read EVKTETQAKVEVKSEPESDGAKEDDR and SMDLRDQAKKDIAAESSKD. Basic residues predominate over residues 218-227; that stretch reads KKGKKSKKDK. A compositionally biased stretch (acidic residues) spans 287–299; the sequence is DVEDLSSESEDES. Polar residues predominate over residues 300–315; it reads TPSASRPATGTSTPTV. Residues 328–339 are compositionally biased toward basic residues; sequence HSVRQKWIRSKK.

The protein belongs to the PINX1 family.

It is found in the nucleus. The protein resides in the nucleolus. Functionally, involved in rRNA-processing at A0, A1 and A2 sites and negatively regulates telomerase. The chain is Protein PXR1 (PXR1) from Phaeosphaeria nodorum (strain SN15 / ATCC MYA-4574 / FGSC 10173) (Glume blotch fungus).